The following is a 394-amino-acid chain: Putative pectate lyase 17 (394 aa).

The signal sequence occupies residues 1–22 (MTHFTVSCLLVALFLCQSLVHA). Ca(2+) contacts are provided by D192, D216, and D220. R272 is a catalytic residue.

The protein belongs to the polysaccharide lyase 1 family. The cofactor is Ca(2+).

The catalysed reaction is Eliminative cleavage of (1-&gt;4)-alpha-D-galacturonan to give oligosaccharides with 4-deoxy-alpha-D-galact-4-enuronosyl groups at their non-reducing ends.. The protein operates within glycan metabolism; pectin degradation; 2-dehydro-3-deoxy-D-gluconate from pectin: step 2/5. This chain is Putative pectate lyase 17, found in Arabidopsis thaliana (Mouse-ear cress).